Here is a 334-residue protein sequence, read N- to C-terminus: UDP-N-acetylglucosamine 4,6-dehydratase (inverting) (334 aa).

NADP(+)-binding positions include 13–16 (TGSF), 37–42 (SRDELK), 61–62 (DV), alanine 81, lysine 85, and 123–124 (LS). Lysine 85 lines the substrate pocket. Residue lysine 127 is part of the active site. Tyrosine 135 and lysine 139 together coordinate NADP(+). Residue asparagine 167 coordinates substrate. 168–172 (VVGSR) contributes to the NADP(+) binding site. 4 residues coordinate substrate: valine 175, threonine 193, arginine 252, and glutamate 255.

The protein belongs to the polysaccharide synthase family. As to quaternary structure, homohexamer. NADP(+) serves as cofactor.

It carries out the reaction UDP-N-acetyl-alpha-D-glucosamine = UDP-2-acetamido-2,6-dideoxy-beta-L-arabino-hex-4-ulose + H2O. In terms of biological role, catalyzes the first step in the biosynthesis of pseudaminic acid, a sialic-acid-like sugar that is used to modify flagellin. Has both C6 dehydratase and C5 epimerase activities that result in the production of both UDP-2-acetamido-2,6-dideoxy-beta-L-arabino-4-hexulose and UDP-2-acetamido-2,6-dideoxy-alpha-D-xylo-4-hexulose. The polypeptide is UDP-N-acetylglucosamine 4,6-dehydratase (inverting) (pseB) (Campylobacter jejuni subsp. jejuni serotype O:2 (strain ATCC 700819 / NCTC 11168)).